Reading from the N-terminus, the 744-residue chain is Catalase-peroxidase (744 aa).

The signal sequence occupies residues 1–22 (MSPRARRCTDRCARMSERSMNA). The segment at residues 114-234 (WHSAGTYRLA…LGATEMGLIY (121 aa)) is a cross-link (tryptophyl-tyrosyl-methioninium (Trp-Tyr) (with M-260)). The active-site Proton acceptor is H115. Residues 234 to 260 (YVNPEGPDRNGDPISAAKFIRETFARM) constitute a cross-link (tryptophyl-tyrosyl-methioninium (Tyr-Met) (with W-114)). Residue H275 coordinates heme b.

The protein belongs to the peroxidase family. Peroxidase/catalase subfamily. Homodimer or homotetramer. Heme b is required as a cofactor. Post-translationally, formation of the three residue Trp-Tyr-Met cross-link is important for the catalase, but not the peroxidase activity of the enzyme.

It catalyses the reaction H2O2 + AH2 = A + 2 H2O. The enzyme catalyses 2 H2O2 = O2 + 2 H2O. Functionally, bifunctional enzyme with both catalase and broad-spectrum peroxidase activity. The polypeptide is Catalase-peroxidase (Azorhizobium caulinodans (strain ATCC 43989 / DSM 5975 / JCM 20966 / LMG 6465 / NBRC 14845 / NCIMB 13405 / ORS 571)).